The sequence spans 79 residues: Small ribosomal subunit protein uS17 (79 aa).

Belongs to the universal ribosomal protein uS17 family. As to quaternary structure, part of the 30S ribosomal subunit.

Functionally, one of the primary rRNA binding proteins, it binds specifically to the 5'-end of 16S ribosomal RNA. The polypeptide is Small ribosomal subunit protein uS17 (Caulobacter vibrioides (strain NA1000 / CB15N) (Caulobacter crescentus)).